The following is a 117-amino-acid chain: Large ribosomal subunit protein bL20 (117 aa).

Belongs to the bacterial ribosomal protein bL20 family.

In terms of biological role, binds directly to 23S ribosomal RNA and is necessary for the in vitro assembly process of the 50S ribosomal subunit. It is not involved in the protein synthesizing functions of that subunit. The protein is Large ribosomal subunit protein bL20 of Idiomarina loihiensis (strain ATCC BAA-735 / DSM 15497 / L2-TR).